Here is a 347-residue protein sequence, read N- to C-terminus: ATP-dependent (S)-NAD(P)H-hydrate dehydratase (347 aa).

Positions 53 to 344 (TLQLVRNIIP…AEVGAAFSKL (292 aa)) constitute a YjeF C-terminal domain. Residue Tyr85 is modified to Phosphotyrosine. Residues Gly153 and 206-212 (NHVEFSR) contribute to the (6S)-NADPHX site. N-linked (GlcNAc...) asparagine glycosylation occurs at Asn240. ATP contacts are provided by residues 246-250 (KGERD) and 265-274 (GSSRRCGGQG). Asp275 provides a ligand contact to (6S)-NADPHX. Asn297 carries an N-linked (GlcNAc...) asparagine glycan.

The protein belongs to the NnrD/CARKD family. Mg(2+) is required as a cofactor.

It localises to the mitochondrion. The catalysed reaction is (6S)-NADHX + ATP = ADP + phosphate + NADH + H(+). The enzyme catalyses (6S)-NADPHX + ATP = ADP + phosphate + NADPH + H(+). Its function is as follows. Catalyzes the dehydration of the S-form of NAD(P)HX at the expense of ATP, which is converted to ADP. Together with NAD(P)HX epimerase, which catalyzes the epimerization of the S- and R-forms, the enzyme allows the repair of both epimers of NAD(P)HX, a damaged form of NAD(P)H that is a result of enzymatic or heat-dependent hydration. The polypeptide is ATP-dependent (S)-NAD(P)H-hydrate dehydratase (Homo sapiens (Human)).